The sequence spans 191 residues: Fe/S biogenesis protein NfuA (191 aa).

2 residues coordinate [4Fe-4S] cluster: Cys149 and Cys152.

It belongs to the NfuA family. As to quaternary structure, homodimer. It depends on [4Fe-4S] cluster as a cofactor.

In terms of biological role, involved in iron-sulfur cluster biogenesis. Binds a 4Fe-4S cluster, can transfer this cluster to apoproteins, and thereby intervenes in the maturation of Fe/S proteins. Could also act as a scaffold/chaperone for damaged Fe/S proteins. The polypeptide is Fe/S biogenesis protein NfuA (Salmonella paratyphi A (strain ATCC 9150 / SARB42)).